Here is a 506-residue protein sequence, read N- to C-terminus: Aldehyde dehydrogenase (506 aa).

218 to 224 (GFGLEAG) is a binding site for NAD(+). Active-site residues include Glu-262 and Cys-301.

The protein belongs to the aldehyde dehydrogenase family.

It carries out the reaction an aldehyde + NAD(+) + H2O = a carboxylate + NADH + 2 H(+). This is Aldehyde dehydrogenase from Rhodospirillum rubrum (strain ATCC 11170 / ATH 1.1.1 / DSM 467 / LMG 4362 / NCIMB 8255 / S1).